Consider the following 290-residue polypeptide: Cilia- and flagella-associated protein 298 (290 aa).

This sequence belongs to the CFAP298 family. As to quaternary structure, interacts with dnaaf1/swt. Interacts with lrrc6/sea. Interacts with dvl (via DEP and PDZ domains). Strongly expressed in ciliated tissues of the embryonic trunk, including the pronephric ducts and spinal canal.

The protein localises to the cytoplasm. It is found in the cytoskeleton. Its subcellular location is the cilium basal body. Plays a role in motile cilium function, possibly by acting on outer dynein arm assembly. Seems to be important for initiation rather than maintenance of cilium motility. Required for correct positioning of cilia at the apical cell surface, suggesting an additional role in the planar cell polarity (PCP) pathway. May suppress canonical Wnt signaling activity. The chain is Cilia- and flagella-associated protein 298 from Danio rerio (Zebrafish).